A 394-amino-acid chain; its full sequence is MTSILTNIAAMAALQTLRTIGSNMEETQAHVSSGLRVGQAADNAAYWSIATTMRSDNMALSAVQDALGLGAAKVDTAYSGMESAIEVVKEIKAKLVAATEDGVDKAKIQEEIDQLKDQLTSIAEAASFSGENWLQADLSGGPVTKSVVGSFVRDAGGAVSVKKVDYSLNTNSVLFDTAGNTGILDKVYNVSQASVTLPVNVNGTTSEYTVGAYNVDDLIDASATFDGDYANVGAGALAGDYVKVQGSWVKAVDVAATGQEVVYDDGTTKWGVDTTVTGAPATNVAAPASIATIDITIAAQAGNLDALIAGVDEALTDMTSAAADLGSIAMRIDLQSDFVNKLSDSIDSGVGRLVDADMNEESTRLKALQTQQQLAIQSLSIANSASENVLTLFR.

The protein belongs to the bacterial flagellin family.

It localises to the secreted. It is found in the bacterial flagellum. Its function is as follows. Flagellin is the subunit protein which polymerizes to form the filaments of bacterial flagella. The protein is Flagellin B (flaB) of Rhizobium meliloti (strain 1021) (Ensifer meliloti).